A 133-amino-acid chain; its full sequence is Small ribosomal subunit protein uS8 (133 aa).

The protein belongs to the universal ribosomal protein uS8 family. As to quaternary structure, part of the 30S ribosomal subunit. Contacts proteins S5 and S12.

In terms of biological role, one of the primary rRNA binding proteins, it binds directly to 16S rRNA central domain where it helps coordinate assembly of the platform of the 30S subunit. In Deinococcus radiodurans (strain ATCC 13939 / DSM 20539 / JCM 16871 / CCUG 27074 / LMG 4051 / NBRC 15346 / NCIMB 9279 / VKM B-1422 / R1), this protein is Small ribosomal subunit protein uS8.